The following is a 621-amino-acid chain: MLPNSILKKIYICNQKEKIISRSFLLKLFKSQIGYPKSLAQLNSALSSIMRWYSHKGYQWALIQMHYIEGSSSIIVNIDEGLISTIRTEYYTSSLERSSKSSYTNMIEKHLSIRIGHPINIIYLKRKINYLKKNKLVGNIIYSVERSRNNSSHLDLKFQIQELQDKELVLFGENLYKTSYVIAFLSHLLQEPLYLANSWETYNIDQMSANRFKLHYYQPICNYQYINNKELADILIYLFSKSTFQHIKNSRFNPLLNCDGETTSRCKLYLRNLSNASSYFTVSMHSLENTINLKLRYLNPSLRISKKFTIQVVIQIIKKIASSCIFPSSIFLKNQKIFGQKFTNQYIFEGLMTYNITSCFSMSEKIFLSRNVQTKYFVKNLQTVKFISTTKALIGSNDHWLKKQSKLLYRQFLVLWLKLYYQNFDTLKWPTKGHLLEIESCYFTPFQESTFLNYHSQFHYNNLFFHKINIQHITHFSLPFYFQSRINYILRNVLKVQSNLKMETLPILLCRAYFEDKVCKPFFNFSIRIRTEYQVPINNKSRISFFCNYIRPFLKNSYQTCIIFQSSLINQKFISSLYQKLFYGLEIQLKLPINQIPPLSIEYTINSGRKFCIYLYISHQQ.

The protein localises to the plastid. Its subcellular location is the chloroplast. This is an uncharacterized protein from Porphyra purpurea (Red seaweed).